Reading from the N-terminus, the 391-residue chain is Transmembrane protein 79 (391 aa).

Residues 1–114 form a disordered region; the sequence is MTEPETLALL…TKSEEPFKED (114 aa). Residues 1–200 lie on the Cytoplasmic side of the membrane; it reads MTEPETLALL…GREALRAVAS (200 aa). Residues 103–114 are compositionally biased toward basic and acidic residues; the sequence is APTKSEEPFKED. Residues 201–221 traverse the membrane as a helical segment; that stretch reads VVAALIFFPCLLYGAYAFLPF. The Extracellular segment spans residues 222-240; the sequence is DAPRLPTMSSRLVYTLRCG. The chain crosses the membrane as a helical span at residues 241–261; it reads VFATFPIVLGLLVYGLSLLCF. Over 262–279 the chain is Cytoplasmic; that stretch reads SALRPFGEPRREVEIHRQ. Residues 280–300 traverse the membrane as a helical segment; sequence YVAQSVQLFILYFFNLAVLST. Residues 301-309 are Extracellular-facing; sequence YLPQDTLKL. Residues 310-330 traverse the membrane as a helical segment; sequence LPLLTGLFAISRLIYWLTFAV. Over 331 to 339 the chain is Cytoplasmic; sequence GRSFRGFGY. The helical transmembrane segment at 340–360 threads the bilayer; the sequence is GLTFLPLLAMLVWNLYYMFVV. Residues 361–391 lie on the Extracellular side of the membrane; it reads EPERMLTASESRLDYPDHARSVSDYRPRSWG.

In terms of tissue distribution, expressed in the epidermis of the skin. Expressed in epithelial cells of the outermost layer of the stratum granulosum (SG) and in hair follicles (at protein level).

It is found in the lysosome. It localises to the golgi apparatus. Its subcellular location is the trans-Golgi network. The protein resides in the membrane. Functionally, contributes to the epidermal integrity and skin barrier function. Plays a role in the lamellar granule (LG) secretory system and in the stratum corneum (SC) epithelial cell formation. The polypeptide is Transmembrane protein 79 (Tmem79) (Mus musculus (Mouse)).